The following is a 301-amino-acid chain: MKIGILSQFPELYSTRRLVAACESRGHEAVVINTLNCYMNINSIKPSIHYQGQELTGFDAIIPRIHASVTFYGCAVVRQFEMMGVFAANDSISIARSRDKLRALQLLSRKGIGMPVTGFANKPNDIPDLINMVGGAPLVIKLLEGTQGIGVVLAETKTAAESVIEAFLGLKANIMVQEYIKESNGSDIRCFVVGDKVVASMKRQGPEGDFRSNLHLGGCGEKVKITPEERKMAVAAVKAMGLVVAGVDILRSNRGPLILEVNSAPGIEGIEQTTGISVTEPIVEYIEKMVLARKSNRAVIA.

Residues 104–287 (LQLLSRKGIG…VTEPIVEYIE (184 aa)) form the ATP-grasp domain. ATP-binding positions include K141, 178 to 179 (EY), D187, and 211 to 213 (RSN). Mg(2+) is bound by residues D248, E260, and N262. Positions 248, 260, and 262 each coordinate Mn(2+).

The protein belongs to the RimK family. It depends on Mg(2+) as a cofactor. Requires Mn(2+) as cofactor.

This is Probable alpha-L-glutamate ligase 1 from Shewanella sp. (strain MR-4).